A 361-amino-acid chain; its full sequence is Cobalt-precorrin-5B C(1)-methyltransferase (361 aa).

The protein belongs to the CbiD family.

The catalysed reaction is Co-precorrin-5B + S-adenosyl-L-methionine = Co-precorrin-6A + S-adenosyl-L-homocysteine. It functions in the pathway cofactor biosynthesis; adenosylcobalamin biosynthesis; cob(II)yrinate a,c-diamide from sirohydrochlorin (anaerobic route): step 6/10. Its function is as follows. Catalyzes the methylation of C-1 in cobalt-precorrin-5B to form cobalt-precorrin-6A. This chain is Cobalt-precorrin-5B C(1)-methyltransferase, found in Methanobrevibacter smithii (strain ATCC 35061 / DSM 861 / OCM 144 / PS).